The primary structure comprises 54 residues: Protein PIGBOS1 (54 aa).

Topologically, residues 1 to 4 (MFRR) are mitochondrial intermembrane. Residues 5–25 (LTFAQLLFATVLGIAGGVYIF) form a helical membrane-spanning segment. The Cytoplasmic portion of the chain corresponds to 26–54 (QPVFEQYAKDQKELKEKMQLVQESEEKKS). The required for interaction with CLCC1 stretch occupies residues 30 to 36 (EQYAKDQ).

As to quaternary structure, homooligomer. Interacts (via C-terminus) with endoplasmic reticulum (ER) protein CLCC1; the interaction occurs at the mitochondria-associated ER membrane, a zone of contact between the ER and mitochondrial membranes, but does not appear to play a role in ER-mitochondria tethering and is not affected by ER stress.

Its subcellular location is the mitochondrion outer membrane. In terms of biological role, plays a role in regulation of the unfolded protein response triggered by endoplasmic reticulum (ER) stress resulting from the presence of unfolded proteins in the ER lumen. The protein is Protein PIGBOS1 of Homo sapiens (Human).